The sequence spans 649 residues: V-type ATP synthase subunit I (649 aa).

7 helical membrane-spanning segments follow: residues 312–332, 360–380, 455–475, 485–505, 520–540, 556–576, and 593–613; these read FLSFFVFFSMIINDAGYGLIF, FMILGGGCVCWGGATTSFFGV, DNILMEIALLVGVVHLSLGML, IGWVVFMCGAYMYLPIYLQAV, GQVGYYVTFIGLGIAVLGGII, VFSDVLSYLRLYALSLAGAMV, and VLIIIFGHTVNIALSIMGGVI.

The protein belongs to the V-ATPase 116 kDa subunit family.

The protein resides in the cell membrane. Its function is as follows. Produces ATP from ADP in the presence of a proton gradient across the membrane. This chain is V-type ATP synthase subunit I (atpI), found in Chlamydia muridarum (strain MoPn / Nigg).